The sequence spans 286 residues: MSSPTPDALLGPADVRELAAALGVRPTKQRGQNFVIDANTVRRIVRTAEVRPDDVVVEVGPGLGSLTLALLEAADRVTAVEIDDVLAGALPATVAARMPARADRFALVHSDAMHVRELPGPAPTALVANLPYNVAVPVLLHMLDTFPGIERTLVMVQAEVADRLAAGPGSKVYGVPSVKANWYAEVKRAGSIGRNVFWPAPNVDSGLVSLVRRSEPLRTTASKAEVFAVVDAAFAQRRKTLRAALAGWAGSAAAAEAALVGAGVSPQARGEALTVEEFARIAEHKV.

S-adenosyl-L-methionine contacts are provided by asparagine 33, valine 35, glycine 60, glutamate 81, aspartate 111, and asparagine 129.

It belongs to the class I-like SAM-binding methyltransferase superfamily. rRNA adenine N(6)-methyltransferase family. RsmA subfamily.

It is found in the cytoplasm. It catalyses the reaction adenosine(1518)/adenosine(1519) in 16S rRNA + 4 S-adenosyl-L-methionine = N(6)-dimethyladenosine(1518)/N(6)-dimethyladenosine(1519) in 16S rRNA + 4 S-adenosyl-L-homocysteine + 4 H(+). Its function is as follows. Specifically dimethylates two adjacent adenosines (A1518 and A1519) in the loop of a conserved hairpin near the 3'-end of 16S rRNA in the 30S particle. May play a critical role in biogenesis of 30S subunits. This is Ribosomal RNA small subunit methyltransferase A from Streptomyces coelicolor (strain ATCC BAA-471 / A3(2) / M145).